Here is a 288-residue protein sequence, read N- to C-terminus: Acetyl-coenzyme A carboxylase carboxyl transferase subunit beta (288 aa).

Residues 32-288 enclose the CoA carboxyltransferase N-terminal domain; it reads MWAKCPSCKR…LRLHSLEGWR (257 aa). 4 residues coordinate Zn(2+): Cys-36, Cys-39, Cys-54, and Cys-57. The segment at 36–57 adopts a C4-type zinc-finger fold; it reads CPSCKRTLYTKEMGAEKICPHC.

This sequence belongs to the AccD/PCCB family. Acetyl-CoA carboxylase is a heterohexamer composed of biotin carboxyl carrier protein (AccB), biotin carboxylase (AccC) and two subunits each of ACCase subunit alpha (AccA) and ACCase subunit beta (AccD). Requires Zn(2+) as cofactor.

It localises to the cytoplasm. It carries out the reaction N(6)-carboxybiotinyl-L-lysyl-[protein] + acetyl-CoA = N(6)-biotinyl-L-lysyl-[protein] + malonyl-CoA. Its pathway is lipid metabolism; malonyl-CoA biosynthesis; malonyl-CoA from acetyl-CoA: step 1/1. Its function is as follows. Component of the acetyl coenzyme A carboxylase (ACC) complex. Biotin carboxylase (BC) catalyzes the carboxylation of biotin on its carrier protein (BCCP) and then the CO(2) group is transferred by the transcarboxylase to acetyl-CoA to form malonyl-CoA. This Enterococcus faecalis (strain ATCC 700802 / V583) protein is Acetyl-coenzyme A carboxylase carboxyl transferase subunit beta.